The following is a 411-amino-acid chain: Thyroxine-binding globulin (411 aa).

The N-terminal stretch at M1 to C15 is a signal peptide. N34, N97, N163, and N251 each carry an N-linked (GlcNAc...) asparagine glycan. Thyroxine-binding residues include N291 and K394.

This sequence belongs to the serpin family. Expressed by the liver and secreted in plasma.

It is found in the secreted. Its function is as follows. Major thyroid hormone transport protein in serum. This Bos taurus (Bovine) protein is Thyroxine-binding globulin (SERPINA7).